The sequence spans 544 residues: Chaperonin GroEL (544 aa).

ATP-binding positions include threonine 30–proline 33, lysine 51, aspartate 87–threonine 91, glycine 415, and aspartate 495.

It belongs to the chaperonin (HSP60) family. As to quaternary structure, forms a cylinder of 14 subunits composed of two heptameric rings stacked back-to-back. Interacts with the co-chaperonin GroES.

It localises to the cytoplasm. The catalysed reaction is ATP + H2O + a folded polypeptide = ADP + phosphate + an unfolded polypeptide.. Together with its co-chaperonin GroES, plays an essential role in assisting protein folding. The GroEL-GroES system forms a nano-cage that allows encapsulation of the non-native substrate proteins and provides a physical environment optimized to promote and accelerate protein folding. The chain is Chaperonin GroEL from Agrobacterium fabrum (strain C58 / ATCC 33970) (Agrobacterium tumefaciens (strain C58)).